Consider the following 504-residue polypeptide: Fumitremorgin C monooxygenase (504 aa).

The chain crosses the membrane as a helical span at residues 9-29 (LPYPGVVGASLLVILGIILLF). Residue Cys442 coordinates heme.

The protein belongs to the cytochrome P450 family. The cofactor is heme.

The protein localises to the membrane. It catalyses the reaction fumitremorgin C + 2 reduced [NADPH--hemoprotein reductase] + 2 O2 = 12alpha,13alpha-dihydroxyfumitremorgin C + 2 oxidized [NADPH--hemoprotein reductase] + 2 H2O + 2 H(+). The protein operates within mycotoxin biosynthesis. Its function is as follows. Cytochrome P450 monooxygenase; part of the gene cluster that mediates the biosynthesis of fumitremorgins, indole alkaloids that carry not only intriguing chemical structures, but also interesting biological and pharmacological activities. The biosynthesis of fumitremorgin-type alkaloids begins by condensation of the two amino acids L-tryptophan and L-proline to brevianamide F, catalyzed by the non-ribosomal peptide synthetase ftmPS/ftmA. Brevianamide F is then prenylated by the prenyltransferase ftmPT1/ftmB in the presence of dimethylallyl diphosphate, resulting in the formation of tryprostatin B. The three cytochrome P450 monooxygenases, ftmP450-1/ftmC, ftmP450-2/ftmE and ftmP450-3/FtmG, are responsible for the conversion of tryprostatin B to 6-hydroxytryprostatin B, tryprostatin A to fumitremorgin C and fumitremorgin C to 12,13-dihydroxyfumitremorgin C, respectively. The putative methyltransferase ftmMT/ftmD is expected for the conversion of 6-hydroxytryprostatin B to tryprostatin A. FtmPT2/FtmH catalyzes the prenylation of 12,13-dihydroxyfumitre-morgin C in the presence of dimethylallyl diphosphate, resulting in the formation of fumitremorgin B. Fumitremorgin B is further converted to verruculogen by ftmOx1/ftmF via the insertion of an endoperoxide bond between the two prenyl moieties. Finally, verruculogen is further converted to fumitremorgin A by the verruculogen prenyltransferase ftmPT3. This chain is Fumitremorgin C monooxygenase, found in Neosartorya fischeri (strain ATCC 1020 / DSM 3700 / CBS 544.65 / FGSC A1164 / JCM 1740 / NRRL 181 / WB 181) (Aspergillus fischerianus).